Here is a 567-residue protein sequence, read N- to C-terminus: Geranylgeranyl transferase type-2 subunit alpha (567 aa).

6 PFTA repeats span residues 44–78 (LDES…QLET), 88–122 (LVKA…RLPE), 124–158 (NWTR…QAAV), 159–193 (PPAE…QLHP), 207–241 (VLLK…RADP), and 363–397 (VLQS…ALDP). Ser98 is subject to Phosphoserine. LRR repeat units lie at residues 442–463 (EVRV…EQLL), 464–486 (LVTH…AALR), 487–508 (CLEV…TNLP), 509–530 (RLQE…QPLA), and 534–555 (RLVL…LEQL).

This sequence belongs to the protein prenyltransferase subunit alpha family. As to quaternary structure, heterotrimer composed of RABGGTA, RABGGTB and CHM; within this trimer, RABGGTA and RABGGTB form the catalytic component B, while CHM (component A) mediates peptide substrate binding. The Rab GGTase dimer (RGGT) interacts with CHM (component A) prior to Rab protein binding; the association is stabilized by geranylgeranyl pyrophosphate (GGpp). The CHM:RGGT:Rab complex is destabilized by GGpp. Interacts with non-phosphorylated form of RAB8A; phosphorylation of RAB8A at 'Thr-72' disrupts this interaction.

The catalysed reaction is geranylgeranyl diphosphate + L-cysteinyl-[protein] = S-geranylgeranyl-L-cysteinyl-[protein] + diphosphate. Its activity is regulated as follows. The enzymatic reaction requires the aid of a Rab escort protein (also called component A), such as CHM. In terms of biological role, catalyzes the transfer of a geranylgeranyl moiety from geranylgeranyl diphosphate to both cysteines of Rab proteins with the C-terminal sequence -XXCC, -XCXC and -CCXX, such as RAB1A, RAB3A, RAB5A and RAB7A. The polypeptide is Geranylgeranyl transferase type-2 subunit alpha (RABGGTA) (Pongo abelii (Sumatran orangutan)).